Consider the following 209-residue polypeptide: Ribosomal RNA large subunit methyltransferase E (209 aa).

The S-adenosyl-L-methionine site is built by Gly-63, Trp-65, Asp-83, Asp-99, and Asp-124. The Proton acceptor role is filled by Lys-164.

This sequence belongs to the class I-like SAM-binding methyltransferase superfamily. RNA methyltransferase RlmE family.

Its subcellular location is the cytoplasm. It carries out the reaction uridine(2552) in 23S rRNA + S-adenosyl-L-methionine = 2'-O-methyluridine(2552) in 23S rRNA + S-adenosyl-L-homocysteine + H(+). Specifically methylates the uridine in position 2552 of 23S rRNA at the 2'-O position of the ribose in the fully assembled 50S ribosomal subunit. The chain is Ribosomal RNA large subunit methyltransferase E from Buchnera aphidicola subsp. Cinara cedri (strain Cc).